The following is a 943-amino-acid chain: 2-oxoglutarate dehydrogenase E1 component (943 aa).

This sequence belongs to the alpha-ketoglutarate dehydrogenase family. In terms of assembly, homodimer. Part of the 2-oxoglutarate dehydrogenase (OGDH) complex composed of E1 (2-oxoglutarate dehydrogenase), E2 (dihydrolipoamide succinyltransferase) and E3 (dihydrolipoamide dehydrogenase); the complex contains multiple copies of the three enzymatic components (E1, E2 and E3). Requires thiamine diphosphate as cofactor.

It catalyses the reaction N(6)-[(R)-lipoyl]-L-lysyl-[protein] + 2-oxoglutarate + H(+) = N(6)-[(R)-S(8)-succinyldihydrolipoyl]-L-lysyl-[protein] + CO2. In terms of biological role, E1 component of the 2-oxoglutarate dehydrogenase (OGDH) complex which catalyzes the decarboxylation of 2-oxoglutarate, the first step in the conversion of 2-oxoglutarate to succinyl-CoA and CO(2). This is 2-oxoglutarate dehydrogenase E1 component (sucA) from Azotobacter vinelandii.